Here is a 284-residue protein sequence, read N- to C-terminus: HTH-type transcriptional activator RhaR (284 aa).

One can recognise an HTH araC/xylS-type domain in the interval 181–279; it reads DMLMNALRAS…GVSPSAYRQR (99 aa). 2 DNA-binding regions (H-T-H motif) span residues 198–219 and 246–269; these read EAFC…KEQT and IGDV…HQAF.

In terms of assembly, binds DNA as a dimer.

The protein resides in the cytoplasm. Functionally, activates expression of the rhaSR operon in response to L-rhamnose. The sequence is that of HTH-type transcriptional activator RhaR from Pectobacterium atrosepticum (strain SCRI 1043 / ATCC BAA-672) (Erwinia carotovora subsp. atroseptica).